The primary structure comprises 186 residues: uncharacterized protein (186 aa).

3 helical membrane-spanning segments follow: residues 43–63, 69–89, and 143–163; these read GAWV…HAIP, LAWT…FHWV, and WMFL…LPAV.

Its subcellular location is the endoplasmic reticulum membrane. This is an uncharacterized protein from Schizosaccharomyces pombe (strain 972 / ATCC 24843) (Fission yeast).